We begin with the raw amino-acid sequence, 214 residues long: ATP-dependent Clp protease proteolytic subunit (214 aa).

Ser-110 functions as the Nucleophile in the catalytic mechanism. His-135 is a catalytic residue.

This sequence belongs to the peptidase S14 family. Fourteen ClpP subunits assemble into 2 heptameric rings which stack back to back to give a disk-like structure with a central cavity, resembling the structure of eukaryotic proteasomes.

It localises to the cytoplasm. It carries out the reaction Hydrolysis of proteins to small peptides in the presence of ATP and magnesium. alpha-casein is the usual test substrate. In the absence of ATP, only oligopeptides shorter than five residues are hydrolyzed (such as succinyl-Leu-Tyr-|-NHMec, and Leu-Tyr-Leu-|-Tyr-Trp, in which cleavage of the -Tyr-|-Leu- and -Tyr-|-Trp bonds also occurs).. Cleaves peptides in various proteins in a process that requires ATP hydrolysis. Has a chymotrypsin-like activity. Plays a major role in the degradation of misfolded proteins. The sequence is that of ATP-dependent Clp protease proteolytic subunit from Legionella pneumophila (strain Paris).